We begin with the raw amino-acid sequence, 212 residues long: Uracil-DNA glycosylase (212 aa).

Aspartate 59 acts as the Proton acceptor in catalysis.

The protein belongs to the uracil-DNA glycosylase (UDG) superfamily. UNG family.

It localises to the cytoplasm. It carries out the reaction Hydrolyzes single-stranded DNA or mismatched double-stranded DNA and polynucleotides, releasing free uracil.. Its function is as follows. Excises uracil residues from the DNA which can arise as a result of misincorporation of dUMP residues by DNA polymerase or due to deamination of cytosine. This chain is Uracil-DNA glycosylase, found in Ureaplasma urealyticum serovar 10 (strain ATCC 33699 / Western).